The sequence spans 41 residues: Conotoxin Ac4.2 (41 aa).

Positions 1–11 are excised as a propeptide; it reads FDGRNAAVNER. The residue at position 13 (Pro13) is a 4-hydroxyproline. Residues Thr18 and Thr20 are each glycosylated (O-linked (HexNAc...) threonine). 4-hydroxyproline occurs at positions 29 and 33. Cys40 bears the Cysteine amide mark.

This sequence belongs to the conotoxin A superfamily. Post-translationally, contains 3 disulfide bonds. In terms of tissue distribution, expressed by the venom duct.

The protein localises to the secreted. Functionally, probable neurotoxin with ion channel inhibitor activity. The protein is Conotoxin Ac4.2 of Conus achatinus (Little frog cone).